Consider the following 145-residue polypeptide: Flagellar assembly factor FliW (145 aa).

This sequence belongs to the FliW family. In terms of assembly, interacts with translational regulator CsrA and flagellin(s).

Its subcellular location is the cytoplasm. Functionally, acts as an anti-CsrA protein, binds CsrA and prevents it from repressing translation of its target genes, one of which is flagellin. Binds to flagellin and participates in the assembly of the flagellum. This Anoxybacillus flavithermus (strain DSM 21510 / WK1) protein is Flagellar assembly factor FliW.